Consider the following 141-residue polypeptide: 6,7-dimethyl-8-ribityllumazine synthase (141 aa).

Residues Phe11, 42–44 (ALE), and 66–68 (VVI) each bind 5-amino-6-(D-ribitylamino)uracil. Residue 71–72 (ET) coordinates (2S)-2-hydroxy-3-oxobutyl phosphate. The active-site Proton donor is the His74. Asn98 lines the 5-amino-6-(D-ribitylamino)uracil pocket. Arg112 is a (2S)-2-hydroxy-3-oxobutyl phosphate binding site.

This sequence belongs to the DMRL synthase family.

It catalyses the reaction (2S)-2-hydroxy-3-oxobutyl phosphate + 5-amino-6-(D-ribitylamino)uracil = 6,7-dimethyl-8-(1-D-ribityl)lumazine + phosphate + 2 H2O + H(+). The protein operates within cofactor biosynthesis; riboflavin biosynthesis; riboflavin from 2-hydroxy-3-oxobutyl phosphate and 5-amino-6-(D-ribitylamino)uracil: step 1/2. Catalyzes the formation of 6,7-dimethyl-8-ribityllumazine by condensation of 5-amino-6-(D-ribitylamino)uracil with 3,4-dihydroxy-2-butanone 4-phosphate. This is the penultimate step in the biosynthesis of riboflavin. The polypeptide is 6,7-dimethyl-8-ribityllumazine synthase (Sphingopyxis alaskensis (strain DSM 13593 / LMG 18877 / RB2256) (Sphingomonas alaskensis)).